Here is a 621-residue protein sequence, read N- to C-terminus: 1-deoxy-D-xylulose-5-phosphate synthase (621 aa).

Residues His-80 and 121 to 123 (GHS) contribute to the thiamine diphosphate site. Asp-152 is a binding site for Mg(2+). Residues 153 to 154 (GA), Asn-181, Tyr-288, and Glu-370 each bind thiamine diphosphate. Asn-181 provides a ligand contact to Mg(2+).

Belongs to the transketolase family. DXPS subfamily. As to quaternary structure, homodimer. It depends on Mg(2+) as a cofactor. The cofactor is thiamine diphosphate.

It catalyses the reaction D-glyceraldehyde 3-phosphate + pyruvate + H(+) = 1-deoxy-D-xylulose 5-phosphate + CO2. It functions in the pathway metabolic intermediate biosynthesis; 1-deoxy-D-xylulose 5-phosphate biosynthesis; 1-deoxy-D-xylulose 5-phosphate from D-glyceraldehyde 3-phosphate and pyruvate: step 1/1. Functionally, catalyzes the acyloin condensation reaction between C atoms 2 and 3 of pyruvate and glyceraldehyde 3-phosphate to yield 1-deoxy-D-xylulose-5-phosphate (DXP). This is 1-deoxy-D-xylulose-5-phosphate synthase from Serratia proteamaculans (strain 568).